Here is a 224-residue protein sequence, read N- to C-terminus: PKHD-type hydroxylase KPN78578_12210 (224 aa).

Positions 77 to 176 (TISAPLFNRY…RQASFLWIQS (100 aa)) constitute a Fe2OG dioxygenase domain. 3 residues coordinate Fe cation: H95, D97, and H157. R167 is a binding site for 2-oxoglutarate.

It depends on Fe(2+) as a cofactor. Requires L-ascorbate as cofactor.

The chain is PKHD-type hydroxylase KPN78578_12210 from Klebsiella pneumoniae subsp. pneumoniae (strain ATCC 700721 / MGH 78578).